A 66-amino-acid chain; its full sequence is Large ribosomal subunit protein bL33c (66 aa).

It belongs to the bacterial ribosomal protein bL33 family.

It localises to the plastid. It is found in the chloroplast. This Dioscorea elephantipes (Elephant's foot yam) protein is Large ribosomal subunit protein bL33c.